The primary structure comprises 237 residues: Eukaryotic translation initiation factor 3 subunit K (237 aa).

The PCI domain maps to 44–219 (CDCNANRALL…EARKAEIRED (176 aa)).

The protein belongs to the eIF-3 subunit K family. Component of the eukaryotic translation initiation factor 3 (eIF-3) complex.

The protein resides in the cytoplasm. Component of the eukaryotic translation initiation factor 3 (eIF-3) complex, which is involved in protein synthesis of a specialized repertoire of mRNAs and, together with other initiation factors, stimulates binding of mRNA and methionyl-tRNAi to the 40S ribosome. The eIF-3 complex specifically targets and initiates translation of a subset of mRNAs involved in cell proliferation. In Neurospora crassa (strain ATCC 24698 / 74-OR23-1A / CBS 708.71 / DSM 1257 / FGSC 987), this protein is Eukaryotic translation initiation factor 3 subunit K.